A 133-amino-acid chain; its full sequence is Small ribosomal subunit protein uS19 (133 aa).

This sequence belongs to the universal ribosomal protein uS19 family.

Protein S19 forms a complex with S13 that binds strongly to the 16S ribosomal RNA. This chain is Small ribosomal subunit protein uS19 (rps19), found in Archaeoglobus fulgidus (strain ATCC 49558 / DSM 4304 / JCM 9628 / NBRC 100126 / VC-16).